The sequence spans 582 residues: PCNA-interacting partner (582 aa).

Composition is skewed to polar residues over residues 471-487 (GVNS…SSGN) and 501-510 (KSSSLTGNTS). The segment at 471 to 514 (GVNSSVGRPTIGTSSGNVHLGRSEKEKVARKSSSLTGNTSSKRK) is disordered.

Belongs to the PARI family. As to quaternary structure, interacts with RAD51 and PCNA. Interacts with PARP1. Interacts with TASOR.

The protein resides in the cytoplasm. The protein localises to the nucleus. Required to suppress inappropriate homologous recombination, thereby playing a central role DNA repair and in the maintenance of genomic stability. Antagonizes homologous recombination by interfering with the formation of the RAD51-DNA homologous recombination structure. Binds single-strand DNA and poly(A) homopolymers. Positively regulate the poly(ADP-ribosyl)ation activity of PARP1; however such function may be indirect. This is PCNA-interacting partner (PARPBP) from Bos taurus (Bovine).